Consider the following 419-residue polypeptide: MFSAVKPLSKYLQFKSIRIYDSVFTIHSRCTVVILLTCSLLLSARQYFGDPIQCISEEKNIEYIQSYCWTMGTYILKLDDFGDQEQALVSPNQEVSYNSAFFSSATTNAPQSSSRVRTRPHFRSSLRRIGEYNEAYARSLSIAEGVGPEIRGQTERQYLRYYQWVIILLLFQSFVFYFPSCLWKVWEGRRLKQLCSEVGDALLSEETYNTRLRMLVKYFTTDYEDMHFCYMAKYVFCEVLNFLISVVNIIVLEVFLNGFWSKYLRALATIPFYDWDRWNRVSSSVFPKIAKCEVLKFGGSGTANVMDNLCILPLNILNEKIFVFLWAWFLLMALMSGLNLLCRLAMICSRYLREQMIRSQLRFMTKRHVKRALRDLTIGDWFLMMKVSVNVNPMLFRDLMQELCELRTSASGSTLESPV.

Residues 1-21 (MFSAVKPLSKYLQFKSIRIYD) are Cytoplasmic-facing. A helical transmembrane segment spans residues 22–42 (SVFTIHSRCTVVILLTCSLLL). The Extracellular portion of the chain corresponds to 43–162 (SARQYFGDPI…QTERQYLRYY (120 aa)). The chain crosses the membrane as a helical span at residues 163–183 (QWVIILLLFQSFVFYFPSCLW). The Cytoplasmic portion of the chain corresponds to 184–238 (KVWEGRRLKQLCSEVGDALLSEETYNTRLRMLVKYFTTDYEDMHFCYMAKYVFCE). Residues 239–259 (VLNFLISVVNIIVLEVFLNGF) form a helical membrane-spanning segment. Residues 260–320 (WSKYLRALAT…ILPLNILNEK (61 aa)) are Extracellular-facing. A helical transmembrane segment spans residues 321-341 (IFVFLWAWFLLMALMSGLNLL). Over 342 to 419 (CRLAMICSRY…ASGSTLESPV (78 aa)) the chain is Cytoplasmic.

Belongs to the pannexin family. In terms of tissue distribution, expressed in the cortex of the pupal CNS and at low levels in the wing imaginal disk.

The protein localises to the cell membrane. The protein resides in the cell junction. Its subcellular location is the gap junction. Functionally, structural component of the gap junctions. This Drosophila melanogaster (Fruit fly) protein is Innexin inx5 (Inx5).